We begin with the raw amino-acid sequence, 94 residues long: Co-chaperonin GroES (94 aa).

Belongs to the GroES chaperonin family. As to quaternary structure, heptamer of 7 subunits arranged in a ring. Interacts with the chaperonin GroEL.

It localises to the cytoplasm. Functionally, together with the chaperonin GroEL, plays an essential role in assisting protein folding. The GroEL-GroES system forms a nano-cage that allows encapsulation of the non-native substrate proteins and provides a physical environment optimized to promote and accelerate protein folding. GroES binds to the apical surface of the GroEL ring, thereby capping the opening of the GroEL channel. The protein is Co-chaperonin GroES of Alkaliphilus oremlandii (strain OhILAs) (Clostridium oremlandii (strain OhILAs)).